A 430-amino-acid polypeptide reads, in one-letter code: Enolase (430 aa).

Q162 lines the (2R)-2-phosphoglycerate pocket. Catalysis depends on E204, which acts as the Proton donor. 3 residues coordinate Mg(2+): D241, E283, and D310. Residues K335, R364, S365, and K386 each coordinate (2R)-2-phosphoglycerate. Residue K335 is the Proton acceptor of the active site.

Belongs to the enolase family. Mg(2+) is required as a cofactor.

The protein localises to the cytoplasm. Its subcellular location is the secreted. The protein resides in the cell surface. The enzyme catalyses (2R)-2-phosphoglycerate = phosphoenolpyruvate + H2O. Its pathway is carbohydrate degradation; glycolysis; pyruvate from D-glyceraldehyde 3-phosphate: step 4/5. In terms of biological role, catalyzes the reversible conversion of 2-phosphoglycerate (2-PG) into phosphoenolpyruvate (PEP). It is essential for the degradation of carbohydrates via glycolysis. This Mycobacteroides abscessus (strain ATCC 19977 / DSM 44196 / CCUG 20993 / CIP 104536 / JCM 13569 / NCTC 13031 / TMC 1543 / L948) (Mycobacterium abscessus) protein is Enolase.